The sequence spans 227 residues: ATP synthase subunit a (227 aa).

5 helical membrane passes run 16–36 (AFVY…VAYI), 79–99 (LVAT…IPGF), 105–125 (SLNL…FEGI), 176–196 (LFLL…AFAL), and 202–222 (VLQT…AVAI).

Belongs to the ATPase A chain family. As to quaternary structure, F-type ATPases have 2 components, CF(1) - the catalytic core - and CF(0) - the membrane proton channel. CF(1) has five subunits: alpha(3), beta(3), gamma(1), delta(1), epsilon(1). CF(0) has three main subunits: a(1), b(2) and c(9-12). The alpha and beta chains form an alternating ring which encloses part of the gamma chain. CF(1) is attached to CF(0) by a central stalk formed by the gamma and epsilon chains, while a peripheral stalk is formed by the delta and b chains.

The protein localises to the cell inner membrane. Its function is as follows. Key component of the proton channel; it plays a direct role in the translocation of protons across the membrane. The protein is ATP synthase subunit a of Campylobacter concisus (strain 13826).